We begin with the raw amino-acid sequence, 570 residues long: PTS system lactose-specific EIICB component (570 aa).

The PTS EIIC type-3 domain occupies 9–410 (IEKGKPFFEK…VVDIIIYYPF (402 aa)). The next 9 helical transmembrane spans lie at 31-51 (GFISAMPVILFSSIFLLIAYV), 65-85 (AILMKPYNYTMGLVAFLVAGT), 104-124 (INFISTMQAAMCGFLFLASDP), 133-153 (AFMGTKGLLTAFLSAFVTVIV), 178-198 (FKDLIPFSAVIIILYALDLVI), 223-243 (GWIGVTIIFGAFALFWFVGIH), 283-303 (MFIVTFGGTGATLVVPFMFMW), 340-360 (VFFIPFVLAPIVNVWIFKLFV), and 382-402 (IIMGTGFGLWSFVLAITLIVV). The PTS EIIB type-3 domain maps to 467–570 (QTNVLVLCAG…LDFVQQQFEN (104 aa)). The Phosphocysteine intermediate; for EIIB activity role is filled by Cys474. A Phosphocysteine; by EIIA modification is found at Cys474.

The protein resides in the cell membrane. It carries out the reaction lactose(out) + N(pros)-phospho-L-histidyl-[protein] = lactose 6-phosphate(in) + L-histidyl-[protein]. Functionally, the phosphoenolpyruvate-dependent sugar phosphotransferase system (sugar PTS), a major carbohydrate active transport system, catalyzes the phosphorylation of incoming sugar substrates concomitantly with their translocation across the cell membrane. The enzyme II LacEF PTS system is involved in lactose transport, but can also use galactose, isopropyl beta-thio-galactopyranoside and thiomethyl beta-D-galactopyranoside (TMG) as substrates. In Staphylococcus aureus, this protein is PTS system lactose-specific EIICB component.